We begin with the raw amino-acid sequence, 305 residues long: Protoheme IX farnesyltransferase (305 aa).

A run of 9 helical transmembrane segments spans residues 29-49 (VTQL…PGMV), 51-71 (WSVL…AFAI), 101-121 (TLIF…VFAN), 123-143 (LTMW…TILL), 151-171 (IVIG…AVSG), 177-197 (AWFL…ALAL), 221-241 (LLHI…PFVY), 244-264 (SGYI…GYAW), and 283-303 (ILYL…KFVP).

This sequence belongs to the UbiA prenyltransferase family. Protoheme IX farnesyltransferase subfamily.

Its subcellular location is the cell inner membrane. It carries out the reaction heme b + (2E,6E)-farnesyl diphosphate + H2O = Fe(II)-heme o + diphosphate. Its pathway is porphyrin-containing compound metabolism; heme O biosynthesis; heme O from protoheme: step 1/1. Converts heme B (protoheme IX) to heme O by substitution of the vinyl group on carbon 2 of heme B porphyrin ring with a hydroxyethyl farnesyl side group. The chain is Protoheme IX farnesyltransferase from Cupriavidus metallidurans (strain ATCC 43123 / DSM 2839 / NBRC 102507 / CH34) (Ralstonia metallidurans).